We begin with the raw amino-acid sequence, 345 residues long: Uroporphyrinogen decarboxylase (345 aa).

Substrate is bound by residues 24-28 (RQAGR), aspartate 74, tyrosine 150, serine 205, and histidine 318.

It belongs to the uroporphyrinogen decarboxylase family. Homodimer.

The protein resides in the cytoplasm. It carries out the reaction uroporphyrinogen III + 4 H(+) = coproporphyrinogen III + 4 CO2. The protein operates within porphyrin-containing compound metabolism; protoporphyrin-IX biosynthesis; coproporphyrinogen-III from 5-aminolevulinate: step 4/4. Catalyzes the decarboxylation of four acetate groups of uroporphyrinogen-III to yield coproporphyrinogen-III. The polypeptide is Uroporphyrinogen decarboxylase (Dichelobacter nodosus (strain VCS1703A)).